A 284-amino-acid polypeptide reads, in one-letter code: Cytochrome P450 2C31 (284 aa).

Cysteine 229 lines the heme pocket.

This sequence belongs to the cytochrome P450 family. Heme serves as cofactor.

The protein resides in the endoplasmic reticulum membrane. It localises to the microsome membrane. The catalysed reaction is an organic molecule + reduced [NADPH--hemoprotein reductase] + O2 = an alcohol + oxidized [NADPH--hemoprotein reductase] + H2O + H(+). In terms of biological role, cytochromes P450 are a group of heme-thiolate monooxygenases. In liver microsomes, this enzyme is involved in an NADPH-dependent electron transport pathway. It oxidizes a variety of structurally unrelated compounds, including steroids, fatty acids, and xenobiotics. The protein is Cytochrome P450 2C31 (CYP2C31) of Capra hircus aegagrus (Wild goat).